The chain runs to 264 residues: Ferric siderophore reductase (264 aa).

One can recognise an FAD-binding FR-type domain in the interval 9 to 127 (SPTRLTYISD…PGPLKMNRFD (119 aa)). Arg73, Ser74, Thr76, Asp90, Val92, His96, Ala100, Thr101, Lys247, Asn249, Thr250, and Ala252 together coordinate FAD.

The protein belongs to the SIP oxidoreductase family. FAD is required as a cofactor.

In terms of biological role, ferric-siderophore reductase involved in iron removal from the siderophores after their transport into the cell. Catalyzes the reduction of the ferric iron bound to the hydroxamate siderophores produced by Shewanella to ferrous iron. Can use a ferredoxin as electron donor. Despite the clear evidence for the interaction with NAD(P)H, no direct reduction of the enzyme by these compounds is observed, nor consumption of NAD(P)H, suggesting that NADH and NADPH are not the physiological electron donors. The protein is Ferric siderophore reductase of Shewanella frigidimarina (strain NCIMB 400).